The primary structure comprises 228 residues: Protein LIAT1 (228 aa).

A disordered region spans residues 1–108 (MAGRGGTGAA…RAEPRDKEEN (108 aa)). Over residues 12-24 (YGEEGEEEEEEEA) the composition is skewed to acidic residues. A lysine-rich domain region spans residues 49-71 (KRKVKKKKKKKKTKGSGKGDADK). The segment covering 50-63 (RKVKKKKKKKKTKG) has biased composition (basic residues). Residues 90-108 (LNPHKDHGLRAEPRDKEEN) are compositionally biased toward basic and acidic residues. The segment at 113-165 (PYSYSINHPCFAEIEDTLSSQINESLRWDGILTDPEAEKERIRIYKLNRRKRY) is interaction with ATE1. Residues 169 to 178 (ALKCFHSDPC) form repeat 1.

Self-associates (via Lys-rich domain); targets LIAT1 to the nucleolus. Interacts with ATE1; it is not a substrate of ATE1, the interaction takes place in the cytoplasm and seems to increase ATE1 arginyltransferase activity. Interacts with JMJD6 and MRPS14. Post-translationally modified by JMJD6 lysyl-hydroxylase activity at its Lys-rich domain, which inhibits its self-association and nucleolar localization. As to expression, highly expressed in spleen, thymus, liver and brown adipose tissue. Moderately expressed in liver, testis and lung.

It is found in the nucleus. Its subcellular location is the nucleolus. It localises to the cytoplasm. Its function is as follows. Participates in nucleolar liquid-liquid phase separation (LLPS) through its N-terminal intrinsically disordered region (IDR). May be involved in ATE1-mediated N-terminal arginylation. The sequence is that of Protein LIAT1 from Mus musculus (Mouse).